Consider the following 505-residue polypeptide: Alpha-1-syntrophin (505 aa).

2 disordered regions span residues M1–G24 and L40–P75. 2 PH domains span residues R6 to N269 and D293 to H401. Residues R9–G18 are compositionally biased toward low complexity. The 84-residue stretch at R87 to K170 folds into the PDZ domain. A phosphoserine mark is found at S101, S184, S189, S193, and S200. The segment at T183 to A212 is disordered. Polar residues predominate over residues L195–L209. Positions P449–A505 constitute an SU domain. Positions P483 to A505 are calmodulin-binding.

It belongs to the syntrophin family. As to quaternary structure, monomer and homodimer. Interacts with the dystrophin related protein DTNA; SGCG of the dystrophin glycoprotein complex; NOS1; GRB2; GA; TGFA; MAPK12 and the sodium channel proteins SCN4A and SCN5A. Interacts with the dystrophin protein DMD in a calmodulin dependent manner and with related protein UTRN; SGCA of the dystrophin glycoprotein complex; F-actin; calmodulin and with the other members of the syntrophin family SNTB1 and SNTB2. Interacts with MYOC; regulates muscle hypertrophy. Interacts with DTNB. Phosphorylated by CaM-kinase II. Phosphorylation may inhibit the interaction with DMD. Highly expressed in skeletal and cardiac muscle and is also detected in brain.

It localises to the cell membrane. Its subcellular location is the sarcolemma. The protein localises to the cell junction. The protein resides in the cytoplasm. It is found in the cytoskeleton. Adapter protein that binds to and probably organizes the subcellular localization of a variety of membrane proteins. May link various receptors to the actin cytoskeleton and the extracellular matrix via dystrophin glycoprotein complex. Plays an important role in synapse formation and in the organization of UTRN and acetylcholine receptors at the neuromuscular synapse. Binds to phosphatidylinositol 4,5-bisphosphate. This chain is Alpha-1-syntrophin (SNTA1), found in Oryctolagus cuniculus (Rabbit).